The sequence spans 154 residues: Metallothiol transferase FosB (154 aa).

The region spanning 8 to 123 is the VOC domain; it reads GINHLLFSVS…DGHKFELHTG (116 aa). Residues His-11, His-70, and Glu-119 each contribute to the Mg(2+) site. Glu-119 acts as the Proton donor/acceptor in catalysis.

This sequence belongs to the fosfomycin resistance protein family. FosB subfamily. In terms of assembly, homodimer. It depends on Mg(2+) as a cofactor.

The protein localises to the cytoplasm. In terms of biological role, metallothiol transferase which confers resistance to fosfomycin by catalyzing the addition of a thiol cofactor to fosfomycin. L-cysteine is probably the physiological thiol donor. The polypeptide is Metallothiol transferase FosB (Bacillus licheniformis (strain ATCC 14580 / DSM 13 / JCM 2505 / CCUG 7422 / NBRC 12200 / NCIMB 9375 / NCTC 10341 / NRRL NRS-1264 / Gibson 46)).